Reading from the N-terminus, the 40-residue chain is uncharacterized protein (40 aa).

Residues 1–14 (MNRMLSLSVQSQRA) show a composition bias toward polar residues. Residues 1–25 (MNRMLSLSVQSQRAPASPSPYGLKI) form a disordered region.

This is an uncharacterized protein from Treponema pallidum (strain Nichols).